Here is a 326-residue protein sequence, read N- to C-terminus: Thiamine thiazole synthase (326 aa).

Substrate contacts are provided by residues Cys-87, 108 to 109, Gly-116, and Val-181; that span reads EA. Residue Cys-215 is modified to 2,3-didehydroalanine (Cys). Substrate is bound by residues Asp-217, His-232, Met-284, and 294 to 296; that span reads RMG.

Belongs to the THI4 family. Homooctamer. It depends on Fe cation as a cofactor. During the catalytic reaction, a sulfide is transferred from Cys-215 to a reaction intermediate, generating a dehydroalanine residue.

Its subcellular location is the cytoplasm. It is found in the nucleus. The enzyme catalyses [ADP-thiazole synthase]-L-cysteine + glycine + NAD(+) = [ADP-thiazole synthase]-dehydroalanine + ADP-5-ethyl-4-methylthiazole-2-carboxylate + nicotinamide + 3 H2O + 2 H(+). Functionally, involved in biosynthesis of the thiamine precursor thiazole. Catalyzes the conversion of NAD and glycine to adenosine diphosphate 5-(2-hydroxyethyl)-4-methylthiazole-2-carboxylic acid (ADT), an adenylated thiazole intermediate. The reaction includes an iron-dependent sulfide transfer from a conserved cysteine residue of the protein to a thiazole intermediate. The enzyme can only undergo a single turnover, which suggests it is a suicide enzyme. May have additional roles in adaptation to various stress conditions and in DNA damage tolerance. The protein is Thiamine thiazole synthase of Sclerotinia sclerotiorum (strain ATCC 18683 / 1980 / Ss-1) (White mold).